The chain runs to 181 residues: Adenylate kinase (181 aa).

10-15 (GAGKGT) serves as a coordination point for ATP. An NMP region spans residues 30–59 (STGELFRRNIEKDTKLGHEAKKYLDAGDLV). AMP-binding positions include Thr31, Arg36, 57 to 59 (DLV), 85 to 88 (GYPR), and Gln92. An LID region spans residues 126 to 132 (GRGRADD). Arg127 lines the ATP pocket. AMP contacts are provided by Arg129 and Arg140. Gly166 lines the ATP pocket.

The protein belongs to the adenylate kinase family. In terms of assembly, monomer.

The protein localises to the cytoplasm. The catalysed reaction is AMP + ATP = 2 ADP. It participates in purine metabolism; AMP biosynthesis via salvage pathway; AMP from ADP: step 1/1. Catalyzes the reversible transfer of the terminal phosphate group between ATP and AMP. Plays an important role in cellular energy homeostasis and in adenine nucleotide metabolism. This is Adenylate kinase from Mycobacterium leprae (strain Br4923).